The chain runs to 647 residues: Versicolorin B synthase (647 aa).

Positions 1–26 are cleaved as a signal peptide; the sequence is MALSTILTAAAMPVAGLFAFAQQSSA. FAD is bound by residues 85–86 and 106–107; these read TA and EA. Asn117 is a glycosylation site (N-linked (GlcNAc...) asparagine). Residue 172 to 175 coordinates FAD; that stretch reads GAML. N-linked (GlcNAc...) asparagine glycosylation is found at Asn222 and Asn509. FAD contacts are provided by residues Ala617 and 628 to 629; that span reads PM.

Belongs to the GMC oxidoreductase family. As to quaternary structure, homodimer. It depends on FAD as a cofactor.

The protein localises to the cytoplasm. The protein resides in the cytosol. It catalyses the reaction (2S-3S)-versiconal hemiacetal = versicolorin B + H2O. The catalysed reaction is (S)-5'-oxoaverantin + H(+) = (1'S,5'S)-averufin + H2O. It functions in the pathway mycotoxin biosynthesis. Its function is as follows. Versicolorin B synthase; part of the fragmented gene cluster that mediates the biosynthesis of dothistromin (DOTH), a polyketide toxin very similar in structure to the aflatoxin precursor, versicolorin B. The first step of the pathway is the conversion of acetate to norsolorinic acid (NOR) and requires the fatty acid synthase subunits hexA and hexB, as well as the polyketide synthase pksA. PksA combines a hexanoyl starter unit and 7 malonyl-CoA extender units to synthesize the precursor NOR. The hexanoyl starter unit is provided to the acyl-carrier protein (ACP) domain by the fungal fatty acid synthase hexA/hexB. The second step is the conversion of NOR to averantin (AVN) and requires the norsolorinic acid ketoreductase nor1, which catalyzes the dehydration of norsolorinic acid to form (1'S)-averantin. The cytochrome P450 monooxygenase avnA then catalyzes the hydroxylation of AVN to 5'hydroxyaverantin (HAVN). The next step is performed by adhA that transforms HAVN to averufin (AVF). Averufin might then be converted to hydroxyversicolorone by cypX and avfA. Hydroxyversicolorone is further converted versiconal hemiacetal acetate (VHA) by moxY. VHA is then the substrate for the versiconal hemiacetal acetate esterase est1 to yield versiconal (VAL). Versicolorin B synthase vbsA then converts VAL to versicolorin B (VERB) by closing the bisfuran ring. Then, the activity of the versicolorin B desaturase verB leads to versicolorin A (VERA). DotB, a predicted chloroperoxidase, may perform epoxidation of the A-ring of VERA. Alternatively, a cytochrome P450, such as cypX or avnA could catalyze this step. It is also possible that another, uncharacterized, cytochrome P450 enzyme is responsible for this step. Opening of the epoxide could potentially be achieved by the epoxide hydrolase epoA. However, epoA seems not to be required for DOTH biosynthesis, but other epoxide hydrolases may have the ability to complement this hydrolysis. Alternatively, opening of the epoxide ring could be achieved non-enzymatically. The next step is the deoxygenation of ring A to yield the 5,8-dihydroxyanthraquinone which is most likely catalyzed by the NADPH dehydrogenase encoded by ver1. The last stages of DOTH biosynthesis are proposed to involve hydroxylation of the bisfuran. OrdB and norB might have oxidative roles here. An alternative possibility is that cytochrome P450 monoogenases such as avnA and cypX might perform these steps in addition to previously proposed steps. This is Versicolorin B synthase from Dothistroma septosporum (Red band needle blight fungus).